Consider the following 160-residue polypeptide: Transcriptional repressor NrdR (160 aa).

The segment covering 1–11 has biased composition (polar residues); that stretch reads MRCPNCNSLDT. Residues 1-20 form a disordered region; that stretch reads MRCPNCNSLDTQVKDSRPTE. Residues 3-34 fold into a zinc finger; the sequence is CPNCNSLDTQVKDSRPTEDSSVIRRRRVCVAC. The ATP-cone domain maps to 49 to 139; sequence LTVIKRNGRR…VYRNFREAKD (91 aa).

Belongs to the NrdR family. Zn(2+) serves as cofactor.

Functionally, negatively regulates transcription of bacterial ribonucleotide reductase nrd genes and operons by binding to NrdR-boxes. The chain is Transcriptional repressor NrdR from Bradyrhizobium diazoefficiens (strain JCM 10833 / BCRC 13528 / IAM 13628 / NBRC 14792 / USDA 110).